A 183-amino-acid chain; its full sequence is Ribonuclease M5 (183 aa).

The Toprim domain maps to 6 to 90; the sequence is KEVIVVEGKD…AYISRVSGTK (85 aa). The Mg(2+) site is built by E12, D59, and D61.

Belongs to the ribonuclease M5 family. Mg(2+) serves as cofactor.

It localises to the cytoplasm. It catalyses the reaction Endonucleolytic cleavage of RNA, removing 21 and 42 nucleotides, respectively, from the 5'- and 3'-termini of a 5S-rRNA precursor.. In terms of biological role, required for correct processing of both the 5' and 3' ends of 5S rRNA precursor. Cleaves both sides of a double-stranded region yielding mature 5S rRNA in one step. The polypeptide is Ribonuclease M5 (Fusobacterium nucleatum subsp. nucleatum (strain ATCC 25586 / DSM 15643 / BCRC 10681 / CIP 101130 / JCM 8532 / KCTC 2640 / LMG 13131 / VPI 4355)).